A 1788-amino-acid chain; its full sequence is Protein Shroom3 (1788 aa).

Disordered regions lie at residues 1-25 (MMQV…STSD), 146-174 (EVNS…HGRL), 225-263 (KAAG…ESSP), 321-367 (GAKS…KQEG), 382-401 (PDIS…PLRL), 469-488 (NIAS…QADH), 498-548 (TVHA…GNKL), 727-768 (EISP…VTPT), 793-821 (TAEQ…APLT), 876-915 (TGRR…SMNS), 1011-1067 (SRRH…SASN), 1086-1133 (SFKN…PETK), 1171-1263 (KRGK…SEAE), 1303-1324 (DTES…PPSL), 1404-1467 (VPAP…AKSQ), and 1507-1538 (ALKE…KRET). 2 stretches are compositionally biased toward polar residues: residues 147 to 161 (VNSS…SRQP) and 230 to 240 (HSTNTSSNAAQ). Composition is skewed to basic and acidic residues over residues 245–259 (VHGD…ERSP) and 357–366 (SVKEREKKQE). The segment covering 476-488 (NKMDERSNRQADH) has biased composition (basic and acidic residues). The ASD1 domain maps to 708-811 (VKDAQCKVLE…SEPEKMNEVG (104 aa)). Positions 793-808 (TAEQKKRSYSEPEKMN) are enriched in basic and acidic residues. Residues 893–903 (QSTYFSGSIMD) are compositionally biased toward polar residues. Residues 904–915 (NQSMTSTSSMNS) show a composition bias toward low complexity. Composition is skewed to polar residues over residues 1055–1067 (EVGN…SASN), 1100–1124 (ENSS…SISG), and 1211–1263 (TSAQ…SEAE). The span at 1313-1323 (PPSPPPFPPPS) shows a compositional bias: pro residues. The span at 1433–1451 (SILQSSEGNFNPSDSQSTL) shows a compositional bias: polar residues. Residues 1467-1756 (QELAKEIVTK…QLRCLTESLP (290 aa)) form the ASD2 domain. Positions 1529–1538 (SEXKEEKRET) are enriched in basic and acidic residues. Residues 1653-1708 (RLARVENALSSLGEDASAEERKTWNEKKKQLCGQHEDARELKENLDRREKLVMDFL) adopt a coiled-coil conformation.

It belongs to the shroom family. As to quaternary structure, interacts with F-actin. Interacts with ROCK1. In terms of tissue distribution, expressed in epithelial cells of the cement gland.

The protein resides in the cell junction. It is found in the adherens junction. The protein localises to the cytoplasm. Its subcellular location is the cytoskeleton. It localises to the apical cell membrane. In terms of biological role, controls cell shape changes in the neuroepithelium during neural tube closure. Induces apical constriction in epithelial cells by promoting the apical accumulation of F-actin and myosin II, and probably by bundling stress fibers. Induces apicobasal cell elongation by redistributing gamma-tubulin and directing the assembly of robust apicobasal microtubule arrays. The polypeptide is Protein Shroom3 (shroom3) (Xenopus laevis (African clawed frog)).